A 326-amino-acid chain; its full sequence is Interleukin-1-binding protein (326 aa).

The first 18 residues, 1 to 18, serve as a signal peptide directing secretion; the sequence is MSILPVIFLSIFFYSSFV. Ig-like domains are found at residues 24–115, 122–212, and 221–322; these read PECI…LNLT, SNID…RIVK, and PSTM…KTVT. A disulfide bond links Cys-48 and Cys-99. N-linked (GlcNAc...) asparagine; by host glycosylation is found at Asn-80, Asn-103, and Asn-113. A disulfide bridge links Cys-143 with Cys-194. Asn-206 and Asn-237 each carry an N-linked (GlcNAc...) asparagine; by host glycan. Cys-242 and Cys-309 are oxidised to a cystine.

The protein belongs to the interleukin-1 receptor family. In terms of assembly, interacts with mouse Il1b.

It is found in the secreted. May reduce the host inflammatory response by interacting with inteleukin-1 beta (Il1b) and thus decreasing the association between IL1B and its cellular receptor. This is Interleukin-1-binding protein (OPG201) from Vaccinia virus (strain Ankara) (VACV).